The primary structure comprises 231 residues: Orotidine 5'-phosphate decarboxylase (231 aa).

Residues aspartate 11, lysine 33, 60–69 (DLKFHDIPNT), threonine 120, arginine 181, glutamine 190, glycine 210, and arginine 211 contribute to the substrate site. Catalysis depends on lysine 62, which acts as the Proton donor.

The protein belongs to the OMP decarboxylase family. Type 1 subfamily. As to quaternary structure, homodimer.

It carries out the reaction orotidine 5'-phosphate + H(+) = UMP + CO2. The protein operates within pyrimidine metabolism; UMP biosynthesis via de novo pathway; UMP from orotate: step 2/2. Its function is as follows. Catalyzes the decarboxylation of orotidine 5'-monophosphate (OMP) to uridine 5'-monophosphate (UMP). The protein is Orotidine 5'-phosphate decarboxylase of Photobacterium profundum (strain SS9).